A 624-amino-acid polypeptide reads, in one-letter code: ADP,ATP carrier protein 1, chloroplastic (624 aa).

The N-terminal 79 residues, Met-1–Lys-79, are a transit peptide targeting the chloroplast. At Ala-80 the chain carries N-acetylalanine. The next 6 helical transmembrane spans lie at Val-108–Phe-128, Ala-182–Met-202, Leu-240–Phe-260, Ala-315–Asn-335, Leu-446–Val-466, and Leu-545–Ala-565. A disordered region spans residues Ser-579 to Leu-624. The segment covering Glu-602–Leu-624 has biased composition (low complexity).

This sequence belongs to the ADP/ATP translocase tlc (TC 2.A.12.2) family.

It is found in the plastid. It localises to the chloroplast membrane. May function as an ATP importer. This is ADP,ATP carrier protein 1, chloroplastic (AATP1) from Arabidopsis thaliana (Mouse-ear cress).